The chain runs to 369 residues: 3-isopropylmalate dehydrogenase (369 aa).

Position 77–90 (77–90 (GPKWDDLPFDKKPE)) interacts with NAD(+). Substrate-binding residues include arginine 97, arginine 107, arginine 135, and aspartate 226. 3 residues coordinate Mg(2+): aspartate 226, aspartate 250, and aspartate 254. Residue 289–301 (GSAPDIAGKDMAN) participates in NAD(+) binding.

Belongs to the isocitrate and isopropylmalate dehydrogenases family. LeuB type 1 subfamily. As to quaternary structure, homodimer. Requires Mg(2+) as cofactor. Mn(2+) is required as a cofactor.

It is found in the cytoplasm. It catalyses the reaction (2R,3S)-3-isopropylmalate + NAD(+) = 4-methyl-2-oxopentanoate + CO2 + NADH. Its pathway is amino-acid biosynthesis; L-leucine biosynthesis; L-leucine from 3-methyl-2-oxobutanoate: step 3/4. Its function is as follows. Catalyzes the oxidation of 3-carboxy-2-hydroxy-4-methylpentanoate (3-isopropylmalate) to 3-carboxy-4-methyl-2-oxopentanoate. The product decarboxylates to 4-methyl-2 oxopentanoate. The sequence is that of 3-isopropylmalate dehydrogenase from Paramagnetospirillum magneticum (strain ATCC 700264 / AMB-1) (Magnetospirillum magneticum).